The following is a 506-amino-acid chain: Zinc finger protein 157 (506 aa).

The region spanning 27-98 (VSFEDVAVDF…EEESSGHGYS (72 aa)) is the KRAB domain. 12 C2H2-type zinc fingers span residues 162–184 (FECHECGKAYCRKSNLVEHLRIH), 190–212 (YECGECAKTFSARSYLIAHQKTH), 218–240 (FECNECGKSFGRKSQLILHTRTH), 246–268 (YECTECGKTFSEKATLTIHQRTH), 274–296 (YECSECGKTFRVKISLTQHHRTH), 302–324 (YECGECGKNFRAKKSLNQHQRIH), 330–352 (YECGECGKFFRMKMTLNNHQRTH), 358–380 (YQCNECGKSFRVHSSLGIHQRIH), 386–408 (YECNECGNAFYVKARLIEHQRMH), 414–436 (YECSECGKIFSMKKSLCQHRRTH), 442–464 (YECSECGNAFYVKVRLIEHQRIH), and 470–492 (FECQECGKAFCRKAHLTEHQRTH).

Belongs to the krueppel C2H2-type zinc-finger protein family.

The protein localises to the nucleus. May be involved in transcriptional regulation. The polypeptide is Zinc finger protein 157 (ZNF157) (Homo sapiens (Human)).